The following is a 216-amino-acid chain: MEEIRFCPEHGFYRGEKCRCGAEGELILPKEKVEKLGKFISGVLRHFPDKFGLNMDENGWVNLESLARVVKRRYKWANIWLIKALVYSDEKQRYELKGDKIRARYGHSIDVKLSDFPEAKEDVLYYGTSEEEAHRMLEIGIKPVNQRYVHLSTTIEKSKEVASIRTDTPIVLEIDAKKAREDGIRIIKANDLIALAEEIPAKYIKRQIVFNQYSSS.

This sequence belongs to the KptA/TPT1 family.

In terms of biological role, removes the 2'-phosphate from RNA via an intermediate in which the phosphate is ADP-ribosylated by NAD followed by a presumed transesterification to release the RNA and generate ADP-ribose 1''-2''-cyclic phosphate (APPR&gt;P). May function as an ADP-ribosylase. The polypeptide is Probable RNA 2'-phosphotransferase 1 (kptA1) (Archaeoglobus fulgidus (strain ATCC 49558 / DSM 4304 / JCM 9628 / NBRC 100126 / VC-16)).